The following is a 305-amino-acid chain: NAD kinase (305 aa).

The Proton acceptor role is filled by D82. Residues 82 to 83 (DG), 156 to 157 (ND), R184, D186, 197 to 202 (TAYALS), A221, and Q255 contribute to the NAD(+) site.

It belongs to the NAD kinase family. Requires a divalent metal cation as cofactor.

It is found in the cytoplasm. It catalyses the reaction NAD(+) + ATP = ADP + NADP(+) + H(+). Involved in the regulation of the intracellular balance of NAD and NADP, and is a key enzyme in the biosynthesis of NADP. Catalyzes specifically the phosphorylation on 2'-hydroxyl of the adenosine moiety of NAD to yield NADP. In Cupriavidus pinatubonensis (strain JMP 134 / LMG 1197) (Cupriavidus necator (strain JMP 134)), this protein is NAD kinase.